The following is a 322-amino-acid chain: Interferon regulatory factor 1 (322 aa).

Residues 5–113 (RMRMRPWLEM…SAVRVYRMLP (109 aa)) constitute a DNA-binding region (IRF tryptophan pentad repeat). An N6-acetyllysine modification is found at Lys78. A disordered region spans residues 92 to 164 (EEVKDQSRNK…STLPDDHSNY (73 aa)). The span at 146 to 157 (DTFSDGLSSSTL) shows a compositional bias: polar residues. Residues Lys276 and Lys296 each participate in a glycyl lysine isopeptide (Lys-Gly) (interchain with G-Cter in SUMO) cross-link.

This sequence belongs to the IRF family. In terms of assembly, monomer. Homodimer. Interacts with EP300. Interacts with MYD88. Interacts with PIAS3. Interacts with SPOP. Post-translationally, phosphorylated by CK2 and this positively regulates its activity. Sumoylation represses the transcriptional activity and displays enhanced resistance to protein degradation. Sumoylated by UBE2I/UBC9 and SUMO1. Inactivates the tumor suppressor activity. Elevated levels in tumor cells. Major site is Lys-276. Sumoylation is enhanced by PIAS3. Desumoylated by SENP1 in tumor cells and appears to compete with ubiquitination on C-terminal sites. In terms of processing, ubiquitinated in a SPOP-depedent manner. Appears to compete with sumoylation on C-terminal sites.

It localises to the nucleus. The protein localises to the cytoplasm. Activated by MYD88. Functionally, transcriptional regulator which displays a remarkable functional diversity in the regulation of cellular responses. Regulates transcription of IFN and IFN-inducible genes, host response to viral and bacterial infections, regulation of many genes expressed during hematopoiesis, inflammation, immune responses and cell proliferation and differentiation, regulation of the cell cycle and induction of growth arrest and programmed cell death following DNA damage. Stimulates both innate and acquired immune responses through the activation of specific target genes and can act as a transcriptional activator and repressor regulating target genes by binding to an interferon-stimulated response element (ISRE) in their promoters. Has an essentail role in IFNG-dependent immunity to mycobacteria. Binds to a consensus sequence in gene promoters. Its target genes for transcriptional activation activity include: genes involved in anti-viral response, such as IFN-alpha/beta, RIGI, TNFSF10/TRAIL, ZBP1, OAS1/2, PIAS1/GBP, EIF2AK2/PKR and RSAD2/viperin; antibacterial response, such as GBP2, GBP5 and NOS2/INOS; anti-proliferative response, such as p53/TP53, LOX and CDKN1A; apoptosis, such as BBC3/PUMA, CASP1, CASP7 and CASP8; immune response, such as IL7, IL12A/B and IL15, PTGS2/COX2 and CYBB; DNA damage responses and DNA repair, such as POLQ/POLH; MHC class I expression, such as TAP1, PSMB9/LMP2, PSME1/PA28A, PSME2/PA28B and B2M and MHC class II expression, such as CIITA; metabolic enzymes, such as ACOD1/IRG1. Represses genes involved in anti-proliferative response, such as BIRC5/survivin, CCNB1, CCNE1, CDK1, CDK2 and CDK4 and in immune response, such as FOXP3, IL4, ANXA2 and TLR4. Stimulates p53/TP53-dependent transcription through enhanced recruitment of EP300 leading to increased acetylation of p53/TP53. Plays an important role in immune response directly affecting NK maturation and activity, macrophage production of IL12, Th1 development and maturation of CD8+ T-cells. Also implicated in the differentiation and maturation of dendritic cells and in the suppression of regulatory T (Treg) cells development. Acts as a tumor suppressor and plays a role not only in antagonism of tumor cell growth but also in stimulating an immune response against tumor cells. This chain is Interferon regulatory factor 1 (IRF1), found in Bos taurus (Bovine).